Consider the following 780-residue polypeptide: Carboxysome assembly protein CsoS2 (780 aa).

The span at 1 to 15 shows a compositional bias: basic and acidic residues; it reads MARLSSRELALERRK. Disordered regions lie at residues 1-173, 189-212, 226-281, 330-349, and 382-444; these read MARL…RAIE, KHGKTAGKQPTSAAAVARQANPDL, TKAG…NRSV, NRVTGNEVGRSEKVTGDEPG, and SLTQ…TGVT. The stretch at 5–24 is one N-repeat 1 repeat; that stretch reads SSRELALERRKALTTSGKKS. Positions 48–78 are enriched in low complexity; that stretch reads AAAAVEPTAPAVSAPVKPTVSFTPASPSSSS. One copy of the N-repeat 2 repeat lies at 86 to 105; that stretch reads PSRDLVLARRDALSRRGKTA. The segment covering 86-116 has biased composition (basic and acidic residues); the sequence is PSRDLVLARRDALSRRGKTADTSRDRNRADV. Residues 117–130 show a composition bias toward low complexity; the sequence is ARQTQAAAPVAASA. 2 N-repeat repeats span residues 175-194 and 213-235; these read PSRALVLARREAMAKHGKTA and TSRELAQQVRELRTKAGARNKQS. 6 M-repeat repeats span residues 260–309, 320–369, 378–417, 431–480, 490–535, and 541–599; these read KVGE…QTFC, KVRV…AAYC, KVGHSLTQQGRPVSGVMVGRSSSVTGDEAGAGRSLTGDQY, KVGQ…NAFC, KVGF…LENA, and TSAV…ATAC. The interval 260-608 is middle region; that stretch reads KVGESTTSTG…CGNEAPAGTD (349 aa). The segment covering 264-276 has biased composition (low complexity); that stretch reads STTSTGQTVTGTQ. 2 stretches are compositionally biased toward low complexity: residues 387–403 and 432–444; these read GRPVSGVMVGRSSSVTG and VGQSGTLSGTGVT. A C-terminal domain region spans residues 609 to 749; that stretch reads SHGQAPEGAA…ATVPHERKRN (141 aa). C-repeat repeat units lie at residues 623–669 and 693–726; these read SVMS…TEQF and EQPASRVTGEGSSTKITGDDWDRGEHVTGTEGVS. Disordered stretches follow at residues 631 to 661 and 686 to 780; these read AQQQRDDQGAVTGTSYEQGNRITGPFDLAGG and AVVS…GARG. Residues 641-651 show a composition bias toward polar residues; the sequence is VTGTSYEQGNR. The span at 709–720 shows a compositional bias: basic and acidic residues; that stretch reads TGDDWDRGEHVT. Positions 750-780 are C-terminal peptide; that stretch reads EENEWPVSRVTGSSGNTEKGSLITVSGGARG. The segment covering 759–768 has biased composition (polar residues); sequence VTGSSGNTEK.

The protein belongs to the CsoS2 family. Interacts via its N-terminal repeats with RuBisCO. Interacts with the major shell protein CsoS1. Unlike H.neapolitanus and predictions for P.marinus strain MIT 9313, this protein is not thought to have ribosomal frameshifting.

Required for alpha-carboxysome (Cb) assembly, mediates interaction between RuBisCO and the carboxysome shell. The protein is probably intrinsically disordered. The C-terminal repeats act as the encapsulation signal to target proteins to the Cb; they are necessary and sufficient to target both CsoS2 and foreign proteins to the Cb. The N-terminal repeats of this protein bind simultaneously to both subunits of RuBisCO. Probably also interacts with the major shell proteins (CsoS1); that interaction would increase the local concentration of CsoS2 so that it can condense RuBisCO and full carboxysomes can be formed. The protein is Carboxysome assembly protein CsoS2 of Parasynechococcus marenigrum (strain WH8102).